The sequence spans 357 residues: uncharacterized protein (357 aa).

Positions 120–145 (SSSTVNHDQPAEQPSDKSTDDSTGYP) are disordered.

This is an uncharacterized protein from Caenorhabditis elegans.